Consider the following 156-residue polypeptide: Small ribosomal subunit protein uS7 (156 aa).

It belongs to the universal ribosomal protein uS7 family. As to quaternary structure, part of the 30S ribosomal subunit. Contacts proteins S9 and S11.

Functionally, one of the primary rRNA binding proteins, it binds directly to 16S rRNA where it nucleates assembly of the head domain of the 30S subunit. Is located at the subunit interface close to the decoding center, probably blocks exit of the E-site tRNA. The protein is Small ribosomal subunit protein uS7 of Clostridium tetani (strain Massachusetts / E88).